We begin with the raw amino-acid sequence, 71 residues long: UPF0352 protein Spea_1764 (71 aa).

This sequence belongs to the UPF0352 family.

The protein is UPF0352 protein Spea_1764 of Shewanella pealeana (strain ATCC 700345 / ANG-SQ1).